Reading from the N-terminus, the 194-residue chain is Fe/S biogenesis protein NfuA (194 aa).

2 residues coordinate [4Fe-4S] cluster: Cys151 and Cys154.

It belongs to the NfuA family. Homodimer. It depends on [4Fe-4S] cluster as a cofactor.

Its function is as follows. Involved in iron-sulfur cluster biogenesis. Binds a 4Fe-4S cluster, can transfer this cluster to apoproteins, and thereby intervenes in the maturation of Fe/S proteins. Could also act as a scaffold/chaperone for damaged Fe/S proteins. This Vibrio vulnificus (strain CMCP6) protein is Fe/S biogenesis protein NfuA.